The following is a 383-amino-acid chain: Delta(12) acyl-lipid conjugase (11E,13E-forming) (383 aa).

Residues 1–30 (MGEVGPTNRTKTKLDKQQESENRVPHEPPP) form a disordered region. The segment covering 12-26 (TKLDKQQESENRVPH) has biased composition (basic and acidic residues). The next 2 membrane-spanning stretches (helical) occupy residues 56 to 76 (VIHD…YIPM) and 84 to 104 (VAWP…LVLG). Residues 105-109 (HECGH) carry the Histidine box-1 motif. Residues 141 to 145 (HRRHH) carry the Histidine box-2 motif. Helical transmembrane passes span 179 to 199 (FLMI…FNAN), 225 to 245 (VIAS…IALA), and 249 to 269 (VWLI…IVLI). The Histidine box-3 signature appears at 315–319 (HLVHH).

This sequence belongs to the fatty acid desaturase type 1 family. Expressed in developing seeds, but not in leaves.

The protein localises to the membrane. It carries out the reaction a (9Z,12Z)-octadecadienoyl-containing glycerolipid + 2 Fe(II)-[cytochrome b5] + O2 + 2 H(+) = a (9Z,11E,13E)-octadecatrienoyl-containing glycerolipid + 2 Fe(III)-[cytochrome b5] + 2 H2O. The catalysed reaction is (9Z,12Z,15Z)-octadecatrienoyl-containing glycerolipid + 2 Fe(II)-[cytochrome b5] + O2 + 2 H(+) = a (9Z,11E,13E,15Z)-octadecatetraenoyl-containing glycerolipid + 2 Fe(III)-[cytochrome b5] + 2 H2O. It participates in lipid metabolism; polyunsaturated fatty acid biosynthesis. In terms of biological role, converts linoleic acid to alpha-eleostearic acid (18:3(9Z,11E,13E)) and alpha-linolenic acid to alpha-parinaric acid (18:4(9Z,11E, 13E, 15Z)). Converts a single cis double bond at carbon 12 to two conjugated trans bonds at positions 11 and 13. The polypeptide is Delta(12) acyl-lipid conjugase (11E,13E-forming) (Impatiens balsamina (Balsam)).